Consider the following 212-residue polypeptide: Large ribosomal subunit protein uL3 (212 aa).

The interval G147–G166 is disordered. Residue Q153 is modified to N5-methylglutamine.

It belongs to the universal ribosomal protein uL3 family. In terms of assembly, part of the 50S ribosomal subunit. Forms a cluster with proteins L14 and L19. Methylated by PrmB.

One of the primary rRNA binding proteins, it binds directly near the 3'-end of the 23S rRNA, where it nucleates assembly of the 50S subunit. The sequence is that of Large ribosomal subunit protein uL3 from Psychrobacter sp. (strain PRwf-1).